A 438-amino-acid polypeptide reads, in one-letter code: Cyanidin-3-O-glucoside 2-O-glucuronosyltransferase (438 aa).

UDP-alpha-D-glucuronate is bound by residues serine 264, tryptophan 315–valine 316, histidine 333–glutamate 341, and glutamine 355–glutamine 358.

It belongs to the UDP-glycosyltransferase family. As to quaternary structure, monomer. In terms of tissue distribution, expressed in petals. Not detected in sepals, stems, leaves, tubular corollas and white petals.

Its subcellular location is the cytoplasm. It catalyses the reaction cyanidin 3-O-beta-D-glucoside + UDP-alpha-D-glucuronate = cyanidin 3-O-(2-O-beta-D-glucuronosyl)-beta-D-glucoside + UDP + H(+). Inhibited by copper, mercury, UDP, UTP and partially by calcium, cadmium, iron and UMP. Not affected by cobalt, magnesium, manganese, zinc, nickel, tin, uridine, sadium malonate and glucose. Functionally, involved in the production of glucuronosylated anthocyanins that are the origin of the red coloration of flowers. Can use cyanidin 3-O-6''-O-malonylglucoside, cyanidin 3-O-glucoside and delphinidin 3-O-glucosideas substrates, but not pelargonidin 3-O-glucoside, cyanidin 3-O-3'',6''-O-dimalonylglucoside, pelargonidin 3,5-O-diglucoside, pelargonidin 3-O-6''-O-malonylglucoside-5-O-glucoside, quercetin 3-O-glucoside, quercetin 3-O-6''-O-malonylglucoside, daidzin, genistin,7-O-6''-O-malonylglucosides of daidzein and genistein, cyanidin, quercetin, daidzein, genistein p-Nitrophenyl beta-D-glucopyranoside, beta-estradiol, 17alpha-estradiol, 1-naphthol, 2-naphthol, 4-methylumbelliferone, and p-nitrophenol. Highly specific for UDP-glucuronate (UDP-GlcUA). Arg-25 is decisive with respect to UDP-sugar specificity. The sequence is that of Cyanidin-3-O-glucoside 2-O-glucuronosyltransferase (UGAT) from Bellis perennis (English daisy).